The sequence spans 948 residues: UvrABC system protein A (948 aa).

31-38 (GLSGSGKS) contacts ATP. The segment at 249–277 (CPNGHDIGFTELSPRMFSFNSPYGACETC) adopts a C4-type zinc-finger fold. 2 ABC transporter domains span residues 307 to 586 (WAGS…KNSL) and 606 to 934 (GNGS…QYLK). 638-645 (GVSGSGKS) is a binding site for ATP. Residues 737-763 (CETCEGDGILKIEMHFLPDVYVTCEVC) form a C4-type zinc finger.

It belongs to the ABC transporter superfamily. UvrA family. As to quaternary structure, forms a heterotetramer with UvrB during the search for lesions.

The protein localises to the cytoplasm. Its function is as follows. The UvrABC repair system catalyzes the recognition and processing of DNA lesions. UvrA is an ATPase and a DNA-binding protein. A damage recognition complex composed of 2 UvrA and 2 UvrB subunits scans DNA for abnormalities. When the presence of a lesion has been verified by UvrB, the UvrA molecules dissociate. The polypeptide is UvrABC system protein A (Leptospira interrogans serogroup Icterohaemorrhagiae serovar copenhageni (strain Fiocruz L1-130)).